We begin with the raw amino-acid sequence, 343 residues long: Small ribosomal subunit biogenesis GTPase RsgA (343 aa).

The CP-type G domain occupies 116–275; that stretch reads RGQLKPVAAN…LIDSPGIREF (160 aa). GTP is bound by residues 163 to 166 and 217 to 225; these read NKAD and GQSGVGKSS. The Zn(2+) site is built by cysteine 299, cysteine 304, histidine 306, and cysteine 312.

Belongs to the TRAFAC class YlqF/YawG GTPase family. RsgA subfamily. Monomer. Associates with 30S ribosomal subunit, binds 16S rRNA. Requires Zn(2+) as cofactor.

The protein localises to the cytoplasm. Its function is as follows. One of several proteins that assist in the late maturation steps of the functional core of the 30S ribosomal subunit. Helps release RbfA from mature subunits. May play a role in the assembly of ribosomal proteins into the subunit. Circularly permuted GTPase that catalyzes slow GTP hydrolysis, GTPase activity is stimulated by the 30S ribosomal subunit. This is Small ribosomal subunit biogenesis GTPase RsgA from Ectopseudomonas mendocina (strain ymp) (Pseudomonas mendocina).